Here is a 398-residue protein sequence, read N- to C-terminus: Odorant receptor 59b (398 aa).

Over 1-46 (MAVFKLIKPAPLTEKVQSRQGNIYLYRAMWLIGWIPPKEGVLRYVY) the chain is Cytoplasmic. A helical membrane pass occupies residues 47–67 (LFWTCVPFAFGVFYLPVGFII). Over 68–84 (SYVQEFKNFTPGEFLTS) the chain is Extracellular. A helical membrane pass occupies residues 85 to 105 (LQVCINVYGASVKSTITYLFL). The Cytoplasmic segment spans residues 106-141 (WRLRKTEILLDSLDKRLANDSDRERIHNMVARCNYA). Residues 142–162 (FLIYSFIYCGYAGSTFLSYAL) form a helical membrane-spanning segment. Over 163–179 (SGRPPWSVYNPFIDWRD) the chain is Extracellular. A helical transmembrane segment spans residues 180–200 (GMGSLWIQAIFEYITMSFAVL). Over 201 to 269 (QDQLSDTYPL…DMIRPMISRT (69 aa)) the chain is Cytoplasmic. Residues 270–290 (IFVQFALIGSVLGLTLVNVFF) traverse the membrane as a helical segment. Topologically, residues 291-293 (FSN) are extracellular. The helical transmembrane segment at 294-314 (FWKGVASLLFVITILLQTFPF) threads the bilayer. Residues 315–348 (CYTCNMLIDDAQDLSNEIFQSNWVDAEPRYKATL) lie on the Cytoplasmic side of the membrane. The chain crosses the membrane as a helical span at residues 349–369 (VLFMHHVQQPIIFIAGGIFPI). The Extracellular portion of the chain corresponds to 370-398 (SMNSNITVAKFAFSIITIVRQMNLAEQFQ). Asn-374 carries an N-linked (GlcNAc...) asparagine glycan.

This sequence belongs to the insect chemoreceptor superfamily. Heteromeric odorant receptor channel (TC 1.A.69) family. Or2a subfamily. Interacts with Orco. Complexes exist early in the endomembrane system in olfactory sensory neurons (OSNs), coupling these complexes to the conserved ciliary trafficking pathway. In terms of tissue distribution, expressed in olfactory sensory neurons in the antenna.

Its subcellular location is the cell membrane. Its function is as follows. Odorant receptor which mediates acceptance or avoidance behavior, depending on its substrates. The odorant receptor repertoire encodes a large collection of odor stimuli that vary widely in identity, intensity, and duration. Forms a complex with Orco to form odorant-sensing units, providing sensitive and prolonged odorant signaling and calcium permeability. Also plays a role in the response to N,N-Diethyl-meta-toluamide (DEET), the most widely used insect repellent worldwide. The sequence is that of Odorant receptor 59b (Or59b) from Drosophila melanogaster (Fruit fly).